The primary structure comprises 252 residues: Insulin-induced gene 1 protein (252 aa).

Residues 1-59 (MPRLESGAWSCSCAARARHAARPGEAAPKADAMQSPSPSAGRAEREASGGSATTWRQHL) are Cytoplasmic-facing. The segment at 22-48 (RPGEAAPKADAMQSPSPSAGRAEREAS) is disordered. The helical transmembrane segment at 60–82 (VQRSVVLFVVGAFMALVLNLLQI) threads the bilayer. Topologically, residues 83-101 (QRNVTLFPDEVIATLFSSA) are extracellular. A helical transmembrane segment spans residues 102–119 (WWVPPCCGTAAAVVGLLY). The Cytoplasmic segment spans residues 120–134 (PCIDSHLGEPHKFKR). The helical transmembrane segment at 135–157 (EWASVMRCIAVFVGINHASAKLD) threads the bilayer. Topologically, residues 158–160 (FAN) are extracellular. Residues 161–179 (NVQLSLTLAALSLGLWWTF) traverse the membrane as a helical segment. Over 180–184 (DRSRS) the chain is Cytoplasmic. Residues 185-206 (GLGLGITIAFVATLITQFLVYN) traverse the membrane as a helical segment. Over 207-220 (GVYQYTSPDFLYIR) the chain is Extracellular. A helical membrane pass occupies residues 221 to 238 (SWLPCIFFSGGVTVGNIG). The Cytoplasmic portion of the chain corresponds to 239 to 252 (RQLAMGIPEKPHND). Positions 246-252 (PEKPHND) match the KxHxx motif.

Belongs to the INSIG family. As to quaternary structure, interacts with SCAP; interaction is direct and only takes place in the presence of sterols; it prevents interaction between SCAP and the coat protein complex II (COPII). Associates with the SCAP-SREBP complex; association is mediated via its interaction with SCAP and only takes place in the presence of sterols.

The protein resides in the endoplasmic reticulum membrane. Oxysterol-binding protein that mediates feedback control of cholesterol synthesis by controlling both endoplasmic reticulum to Golgi transport of SCAP and degradation of HMGCR. Acts as a negative regulator of cholesterol biosynthesis by mediating the retention of the SCAP-SREBP complex in the endoplasmic reticulum, thereby blocking the processing of sterol regulatory element-binding proteins (SREBPs). Binds oxysterol, including 25-hydroxycholesterol, regulating interaction with SCAP and retention of the SCAP-SREBP complex in the endoplasmic reticulum. In presence of oxysterol, interacts with SCAP, retaining the SCAP-SREBP complex in the endoplasmic reticulum, thereby preventing SCAP from escorting SREBPs to the Golgi. Sterol deprivation reduces oxysterol-binding, disrupting the interaction between INSIG1 and SCAP, thereby promoting Golgi transport of the SCAP-SREBP complex, followed by processing and nuclear translocation of SREBPs. Also regulates cholesterol synthesis by regulating degradation of HMGCR. The chain is Insulin-induced gene 1 protein from Gallus gallus (Chicken).